A 61-amino-acid chain; its full sequence is Large ribosomal subunit protein bL32 (61 aa).

Residues 1 to 19 (MAHPKRRQSKTRTAKRRTH) are compositionally biased toward basic residues. Residues 1–20 (MAHPKRRQSKTRTAKRRTHD) form a disordered region.

The protein belongs to the bacterial ribosomal protein bL32 family.

The chain is Large ribosomal subunit protein bL32 from Porphyromonas gingivalis (strain ATCC 33277 / DSM 20709 / CIP 103683 / JCM 12257 / NCTC 11834 / 2561).